The following is a 368-amino-acid chain: Peptide chain release factor 2 (368 aa).

Position 251 is an N5-methylglutamine (Gln251).

It belongs to the prokaryotic/mitochondrial release factor family. In terms of processing, methylated by PrmC. Methylation increases the termination efficiency of RF2.

The protein localises to the cytoplasm. Its function is as follows. Peptide chain release factor 2 directs the termination of translation in response to the peptide chain termination codons UGA and UAA. In Streptomyces avermitilis (strain ATCC 31267 / DSM 46492 / JCM 5070 / NBRC 14893 / NCIMB 12804 / NRRL 8165 / MA-4680), this protein is Peptide chain release factor 2.